The chain runs to 412 residues: Multifunctional CCA protein (412 aa).

Residues Gly8 and Arg11 each contribute to the ATP site. CTP is bound by residues Gly8 and Arg11. Mg(2+) is bound by residues Asp21 and Asp23. Arg91, Arg137, and Arg140 together coordinate ATP. Arg91, Arg137, and Arg140 together coordinate CTP. The region spanning 228–329 (TGIHTLMTLS…VKLFDSIDAW (102 aa)) is the HD domain.

It belongs to the tRNA nucleotidyltransferase/poly(A) polymerase family. Bacterial CCA-adding enzyme type 1 subfamily. In terms of assembly, monomer. Can also form homodimers and oligomers. Mg(2+) serves as cofactor. The cofactor is Ni(2+).

The enzyme catalyses a tRNA precursor + 2 CTP + ATP = a tRNA with a 3' CCA end + 3 diphosphate. It catalyses the reaction a tRNA with a 3' CCA end + 2 CTP + ATP = a tRNA with a 3' CCACCA end + 3 diphosphate. Functionally, catalyzes the addition and repair of the essential 3'-terminal CCA sequence in tRNAs without using a nucleic acid template. Adds these three nucleotides in the order of C, C, and A to the tRNA nucleotide-73, using CTP and ATP as substrates and producing inorganic pyrophosphate. tRNA 3'-terminal CCA addition is required both for tRNA processing and repair. Also involved in tRNA surveillance by mediating tandem CCA addition to generate a CCACCA at the 3' terminus of unstable tRNAs. While stable tRNAs receive only 3'-terminal CCA, unstable tRNAs are marked with CCACCA and rapidly degraded. This Escherichia coli O139:H28 (strain E24377A / ETEC) protein is Multifunctional CCA protein.